We begin with the raw amino-acid sequence, 401 residues long: MAHVSSETQDVSPKDELTASEASTRSPLCEHTFPGDSDLRSMIEEHAFQVLSQGSLLESPSYTVCVSEPDKDDDFLSLNFPRKLWKIVESDQFKSISWDENGTCIVINEELFKKEILETKAPYRIFQTDAIKSFVRQLNLYGFSKIQQNFQRSAFLATFLSEEKESSVLSKLKFYYNPNFKRGYPQLLVRVKRRIGVKNASPISTLFNEDFNKKHFRAGANMENHNSALAAEASEESLFSASKNLNMPLTRESSVRQIIANSSVPIRSGFPPPSPSTSVGPSEQIATDQHAILNQLTTIHMHSHSTYMQARGHIVNFITTTTSQYHIISPLQNGYFGLTVEPSAVPTRYPLVSVNEAPYRNMLPAGNPWLQMPTIADRSAAPHSRLALQPSPLDKYHPNYN.

The span at 1–11 (MAHVSSETQDV) shows a compositional bias: polar residues. Residues 1-30 (MAHVSSETQDVSPKDELTASEASTRSPLCE) are disordered. A DNA-binding region spans residues 76 to 194 (LSLNFPRKLW…PQLLVRVKRR (119 aa)).

Belongs to the HSF family. Testis-specific. Present in Sertoli cells and spermatogenic cells (at protein level).

The protein resides in the nucleus. Its subcellular location is the cytoplasm. The protein is Heat shock transcription factor, Y-linked (HSFY1) of Homo sapiens (Human).